A 379-amino-acid polypeptide reads, in one-letter code: Salicylate/benzoate carboxyl methyltransferase (379 aa).

An S-adenosyl-L-homocysteine-binding site is contributed by Tyr40. Position 47 (Gln47) interacts with salicylate. Cys82, Asn87, Asp119, Leu120, Ser155, and Phe156 together coordinate S-adenosyl-L-homocysteine. Residues His176 and Trp177 each contribute to the salicylate site. Positions 188, 275, 277, and 278 each coordinate Mg(2+).

It belongs to the methyltransferase superfamily. Type-7 methyltransferase family. SABATH subfamily. In terms of assembly, homodimer. Mg(2+) serves as cofactor. Expressed in flowers and at lower levels in leaves and stems. Hardly detected in roots and siliques. Expressed in the sepals and the leaf trichomes and hydathodes.

It carries out the reaction benzoate + S-adenosyl-L-methionine = methyl benzoate + S-adenosyl-L-homocysteine. It catalyses the reaction salicylate + S-adenosyl-L-methionine = methyl salicylate + S-adenosyl-L-homocysteine. Its function is as follows. Methyltransferase involved in the biosynthesis of methylsalicylate in response to stresses. Utilizes salicylic acid (SA) more efficiently than benzoic acid (BA). Can also use anthranilic acid and m-hydroxybenzoic acid as substrate. In Arabidopsis thaliana (Mouse-ear cress), this protein is Salicylate/benzoate carboxyl methyltransferase (BSMT1).